A 139-amino-acid polypeptide reads, in one-letter code: Translation initiation factor 2 subunit beta (139 aa).

It belongs to the eIF-2-beta/eIF-5 family. In terms of assembly, heterotrimer composed of an alpha, a beta and a gamma chain.

EIF-2 functions in the early steps of protein synthesis by forming a ternary complex with GTP and initiator tRNA. The polypeptide is Translation initiation factor 2 subunit beta (Saccharolobus islandicus (strain Y.N.15.51 / Yellowstone #2) (Sulfolobus islandicus)).